The sequence spans 859 residues: Cation/H(+) antiporter 24 (859 aa).

Transmembrane regions (helical) follow at residues 64–84, 92–112, 122–142, 161–181, 194–214, 227–247, 258–278, 291–311, 312–332, 348–368, 384–404, and 438–458; these read AFST…VVSI, PRIV…FGGI, PIAN…FLFL, YIAA…GMAM, SIGG…YTVL, FAMS…VIFE, YSVF…LLVV, EGTL…LASC, FLTD…GLLV, TFIY…GTNI, FYMT…AALF, and IVGF…TAVT. The disordered stretch occupies residues 538-566; the sequence is IDHEQRKEEEEEEYEEEEEEPERKQSGRI. Residues 546–557 are compositionally biased toward acidic residues; it reads EEEEEYEEEEEE. At Ser-857 the chain carries Phosphoserine.

The protein belongs to the monovalent cation:proton antiporter 2 (CPA2) transporter (TC 2.A.37) family. CHX (TC 2.A.37.4) subfamily. As to expression, specifically expressed in pollen.

The protein localises to the membrane. Functionally, may operate as a cation/H(+) antiporter. This chain is Cation/H(+) antiporter 24 (CHX24), found in Arabidopsis thaliana (Mouse-ear cress).